The primary structure comprises 213 residues: Thymidylate kinase (213 aa).

11 to 18 provides a ligand contact to ATP; sequence GGEGAGKT.

The protein belongs to the thymidylate kinase family.

The enzyme catalyses dTMP + ATP = dTDP + ADP. Its function is as follows. Phosphorylation of dTMP to form dTDP in both de novo and salvage pathways of dTTP synthesis. In Shouchella clausii (strain KSM-K16) (Alkalihalobacillus clausii), this protein is Thymidylate kinase.